The primary structure comprises 230 residues: Cytochrome c oxidase subunit 2 (230 aa).

Over M1–H26 the chain is Mitochondrial intermembrane. The helical transmembrane segment at V27 to S48 threads the bilayer. Residues K49 to E62 lie on the Mitochondrial matrix side of the membrane. A helical membrane pass occupies residues T63 to K82. Residues L83 to E230 lie on the Mitochondrial intermembrane side of the membrane. Cu cation is bound by residues H161, C196, E198, C200, H204, and M207. Position 198 (E198) interacts with Mg(2+).

It belongs to the cytochrome c oxidase subunit 2 family. As to quaternary structure, component of the cytochrome c oxidase (complex IV, CIV), a multisubunit enzyme composed of a catalytic core of 3 subunits and several supernumerary subunits. The complex exists as a monomer or a dimer and forms supercomplexes (SCs) in the inner mitochondrial membrane with ubiquinol-cytochrome c oxidoreductase (cytochrome b-c1 complex, complex III, CIII). Requires Cu cation as cofactor.

The protein localises to the mitochondrion inner membrane. The catalysed reaction is 4 Fe(II)-[cytochrome c] + O2 + 8 H(+)(in) = 4 Fe(III)-[cytochrome c] + 2 H2O + 4 H(+)(out). Component of the cytochrome c oxidase, the last enzyme in the mitochondrial electron transport chain which drives oxidative phosphorylation. The respiratory chain contains 3 multisubunit complexes succinate dehydrogenase (complex II, CII), ubiquinol-cytochrome c oxidoreductase (cytochrome b-c1 complex, complex III, CIII) and cytochrome c oxidase (complex IV, CIV), that cooperate to transfer electrons derived from NADH and succinate to molecular oxygen, creating an electrochemical gradient over the inner membrane that drives transmembrane transport and the ATP synthase. Cytochrome c oxidase is the component of the respiratory chain that catalyzes the reduction of oxygen to water. Electrons originating from reduced cytochrome c in the intermembrane space (IMS) are transferred via the dinuclear copper A center (CU(A)) of subunit 2 and heme A of subunit 1 to the active site in subunit 1, a binuclear center (BNC) formed by heme A3 and copper B (CU(B)). The BNC reduces molecular oxygen to 2 water molecules using 4 electrons from cytochrome c in the IMS and 4 protons from the mitochondrial matrix. This is Cytochrome c oxidase subunit 2 (COII) from Branchiostoma floridae (Florida lancelet).